The chain runs to 265 residues: Glutamate racemase (265 aa).

Residues 9-10 (DS) and 41-42 (YS) each bind substrate. Cys73 (proton donor/acceptor) is an active-site residue. Position 74-75 (74-75 (NT)) interacts with substrate. The active-site Proton donor/acceptor is the Cys184. 185 to 186 (TH) lines the substrate pocket.

Belongs to the aspartate/glutamate racemases family.

It catalyses the reaction L-glutamate = D-glutamate. It functions in the pathway cell wall biogenesis; peptidoglycan biosynthesis. In terms of biological role, provides the (R)-glutamate required for cell wall biosynthesis. The polypeptide is Glutamate racemase (Haemophilus ducreyi (strain 35000HP / ATCC 700724)).